A 350-amino-acid chain; its full sequence is MSQLPTDFASLIKRFQFVSVLDSNPQTKVMSLLGTIDNKDAIITAEKTHFLFDETVRRPSQDGRSTPVLYNCENEYSCINGIQELKEITSNDIYYWGLSVIKQDMESNPTAKLNLIWPATPIHIKKYEQQNFHLVRETPEMYKRIVQPYIEEMCNNGRLKWVNNILYEGAESERVVYKDFSEENKDDGFLILPDMKWDGMNLDSLYLVAIVYRTDIKTIRDLRYSDRQWLINLNNKIRSIVPGCYNYAVHPDELRILVHYQPSYYHFHIHIVNIKHPGLGNSIAAGKAILLEDIIEMLNYLGPEGYMNKTITYAIGENHDLWKRGLEEELTKQLERDGIPKIPKIVNGFK.

An N-acetylserine modification is found at Ser2. Phosphoserine is present on Ser60. At Thr66 the chain carries Phosphothreonine. Thr66 is modified (phosphothreonine; by YAK1). Tyr70 bears the Phosphotyrosine mark. Phosphothreonine is present on Thr120. Substrate contacts are provided by residues Glu171, Lys196, and 259–270 (HYQPSYYHFHIH). The short motif at 266–270 (HFHIH) is the Histidine triad motif element. The active-site Nucleophile is His268.

This sequence belongs to the HIT family. As to quaternary structure, homodimer. Forms heterodimer with DCS2; the interaction inhibits the DCS1 scavenger decapping activity during post-diauxic growth. Phosphorylated. Phosphorylation occurs upon glucose deprivation.

Its subcellular location is the cytoplasm. It localises to the perinuclear region. The protein resides in the P-body. The enzyme catalyses a 5'-end (N(7)-methyl 5'-triphosphoguanosine)-ribonucleoside in mRNA + H2O = N(7)-methyl-GMP + a 5'-end diphospho-ribonucleoside in mRNA + 2 H(+). The hydrolytic product 7-methylguanosine diphosphate (m7GDP) efficiently inhibits the decapping scavenger activity and acts as a competitive inhibitor in vitro. Its function is as follows. Decapping scavenger enzyme that catalyzes the cleavage of a residual cap structure following the degradation of mRNAs by the 3'-&gt;5' exosome-mediated mRNA decay pathway. Hydrolyzes cap analog structures like 7-methylguanosine nucleoside triphosphate (m7GpppG) and tri-methyl guanosine nucleoside triphosphate (m3(2,2,7)GpppG) with up to 10 nucleotide substrates (small capped oligoribonucleotides) and specifically releases 5'-phosphorylated RNA fragments and 7-methylguanosine monophosphate (m7GMP) or tri-methyl guanosine nucleoside monophosphate (m3(2,2,7)GMP), respectively. Does not hydrolyze unmethylated cap analog (GpppG) and shows no decapping activity on intact m7GpppG-capped mRNA molecules longer than 25 nucleotides. Does not hydrolyze 7-methylguanosine diphosphate (m7GDP) and tri-methylguanosine diphosphate (m3(2,2,7)GDP) to (m(7)GMP) and m3(2,2,7)GMP, respectively. May also play a role in the 5'-&gt;3 mRNA decay pathway; m7GDP, the downstream product released by the 5'-&gt;3' mRNA mediated decapping activity, may be also converted by DCS1 to m7GMP. Binds to m7GpppG and strongly to m7GDP. May also regulate the 5'-&gt;3' exoribonucleolytic mRNA decay pathway in a cap-independent manner. Negatively regulates trehalase activity. This chain is m7GpppX diphosphatase, found in Saccharomyces cerevisiae (strain ATCC 204508 / S288c) (Baker's yeast).